The following is a 397-amino-acid chain: MALTPTREDKFSFGLWTIGYTGADPFGGPTRSDLDVVEGVERISELGAYGLTFHDDDLFAFGSTDAERQTQIDRLKGALSDTGIVVPMVTTNLFSAPVFKDGGFTSNDRAVRRFAIRKVLRNIDLAAELGAKTFVMWGGREGAEYDSAKDVRGALERYREAVNLLGDYVTDKGYDIRFAIEPKPNEPRGDILLPTLGHALAFIETLERPELVGVNPEVGHEQMAGLNFTAGIMQALYQGKLFHIDLNGQRGIKYDQDLVFGHGDLQNAFSLVDLLENGGVGGGRSYDGPRHFDYKPSRTEDITGVWDSAAANMRMYLLLKERAQAFRADPEVQEALAAAKVAEIDTPTLNEGESYDDILADRSSYEDFAADEYFDAKGFGFVRLNQLALEHLMGARS.

Catalysis depends on residues His54 and Asp57. Residues Glu181, Glu217, His220, Asp245, Asp255, Asp257, and Asp293 each contribute to the Mg(2+) site.

The protein belongs to the xylose isomerase family. As to quaternary structure, homotetramer. Mg(2+) serves as cofactor.

The protein resides in the cytoplasm. It catalyses the reaction alpha-D-xylose = alpha-D-xylulofuranose. In Clavibacter sepedonicus (Clavibacter michiganensis subsp. sepedonicus), this protein is Xylose isomerase.